Consider the following 452-residue polypeptide: Exodeoxyribonuclease 7 large subunit (452 aa).

The protein belongs to the XseA family. As to quaternary structure, heterooligomer composed of large and small subunits.

The protein resides in the cytoplasm. It catalyses the reaction Exonucleolytic cleavage in either 5'- to 3'- or 3'- to 5'-direction to yield nucleoside 5'-phosphates.. Its function is as follows. Bidirectionally degrades single-stranded DNA into large acid-insoluble oligonucleotides, which are then degraded further into small acid-soluble oligonucleotides. This chain is Exodeoxyribonuclease 7 large subunit, found in Bacillus thuringiensis (strain Al Hakam).